The chain runs to 949 residues: Bifunctional uridylyltransferase/uridylyl-removing enzyme (949 aa).

A disordered region spans residues 1–37 (MKETSFWGETPSLSFADDTDKPLSDRTASPPCDPASS). The tract at residues 1 to 395 (MKETSFWGET…TTGEPPKVVP (395 aa)) is uridylyltransferase. The segment at 396–756 (GPEEFQTIAG…AYPIPERGVT (361 aa)) is uridylyl-removing. One can recognise an HD domain in the interval 516-632 (VDEHIVEAVR…LDLADTIQSP (117 aa)). ACT domains are found at residues 757–834 (ELTV…LDIR) and 870–949 (VIEV…TPAS).

The protein belongs to the GlnD family. Mg(2+) is required as a cofactor.

It carries out the reaction [protein-PII]-L-tyrosine + UTP = [protein-PII]-uridylyl-L-tyrosine + diphosphate. The catalysed reaction is [protein-PII]-uridylyl-L-tyrosine + H2O = [protein-PII]-L-tyrosine + UMP + H(+). Its activity is regulated as follows. Uridylyltransferase (UTase) activity is inhibited by glutamine, while glutamine activates uridylyl-removing (UR) activity. Functionally, modifies, by uridylylation and deuridylylation, the PII regulatory proteins (GlnB and homologs), in response to the nitrogen status of the cell that GlnD senses through the glutamine level. Under low glutamine levels, catalyzes the conversion of the PII proteins and UTP to PII-UMP and PPi, while under higher glutamine levels, GlnD hydrolyzes PII-UMP to PII and UMP (deuridylylation). Thus, controls uridylylation state and activity of the PII proteins, and plays an important role in the regulation of nitrogen assimilation and metabolism. This chain is Bifunctional uridylyltransferase/uridylyl-removing enzyme, found in Gluconobacter oxydans (strain 621H) (Gluconobacter suboxydans).